The primary structure comprises 239 residues: Mediator of RNA polymerase II transcription subunit 4 (239 aa).

A disordered region spans residues 168–221 (QLFSEQPPKTNEPTETETEIDANKAVEEKTKMNYPASPTFTTQEENKEVESPAN). The span at 188–198 (DANKAVEEKTK) shows a compositional bias: basic and acidic residues. Phosphoserine is present on residues Ser-204 and Ser-218.

The protein belongs to the Mediator complex subunit 4 family. As to quaternary structure, component of the Mediator complex.

The protein resides in the nucleus. Its function is as follows. Component of the Mediator complex, a coactivator involved in the regulated transcription of nearly all RNA polymerase II-dependent genes. Mediator functions as a bridge to convey information from gene-specific regulatory proteins to the basal RNA polymerase II transcription machinery. Mediator is recruited to promoters by direct interactions with regulatory proteins and serves as a scaffold for the assembly of a functional preinitiation complex with RNA polymerase II and the general transcription factors. The sequence is that of Mediator of RNA polymerase II transcription subunit 4 (med4) from Schizosaccharomyces pombe (strain 972 / ATCC 24843) (Fission yeast).